We begin with the raw amino-acid sequence, 77 residues long: NAD(P)H-quinone oxidoreductase subunit L (77 aa).

2 helical membrane passes run 12–32 (LVAY…ILFY) and 47–67 (LIVY…SPFL).

This sequence belongs to the complex I NdhL subunit family. NDH-1 can be composed of about 15 different subunits; different subcomplexes with different compositions have been identified which probably have different functions.

Its subcellular location is the cellular thylakoid membrane. It catalyses the reaction a plastoquinone + NADH + (n+1) H(+)(in) = a plastoquinol + NAD(+) + n H(+)(out). The catalysed reaction is a plastoquinone + NADPH + (n+1) H(+)(in) = a plastoquinol + NADP(+) + n H(+)(out). Its function is as follows. NDH-1 shuttles electrons from an unknown electron donor, via FMN and iron-sulfur (Fe-S) centers, to quinones in the respiratory and/or the photosynthetic chain. The immediate electron acceptor for the enzyme in this species is believed to be plastoquinone. Couples the redox reaction to proton translocation, and thus conserves the redox energy in a proton gradient. Cyanobacterial NDH-1 also plays a role in inorganic carbon-concentration. In Prochlorococcus marinus subsp. pastoris (strain CCMP1986 / NIES-2087 / MED4), this protein is NAD(P)H-quinone oxidoreductase subunit L.